The primary structure comprises 457 residues: Argininosuccinate lyase (457 aa).

It belongs to the lyase 1 family. Argininosuccinate lyase subfamily.

Its subcellular location is the cytoplasm. It carries out the reaction 2-(N(omega)-L-arginino)succinate = fumarate + L-arginine. It functions in the pathway amino-acid biosynthesis; L-arginine biosynthesis; L-arginine from L-ornithine and carbamoyl phosphate: step 3/3. This Erwinia tasmaniensis (strain DSM 17950 / CFBP 7177 / CIP 109463 / NCPPB 4357 / Et1/99) protein is Argininosuccinate lyase.